Reading from the N-terminus, the 262-residue chain is Probable lipoprotein EnvF (262 aa).

An N-terminal signal peptide occupies residues 1–25 (MNKIHVTYKNLLLPITFIAATLISA). The N-palmitoyl cysteine moiety is linked to residue Cys26. The S-diacylglycerol cysteine moiety is linked to residue Cys26. Residues 227–262 (EAEKAQQLVEQSRKDIESQRKKAAGKMNEIQQTFKK) are disordered. Positions 237 to 246 (QSRKDIESQR) are enriched in basic and acidic residues.

The protein resides in the cell membrane. The protein is Probable lipoprotein EnvF (envF) of Salmonella typhimurium (strain LT2 / SGSC1412 / ATCC 700720).